A 177-amino-acid chain; its full sequence is Meiotically up-regulated gene 121 protein (177 aa).

An N-terminal signal peptide occupies residues 1–23 (MKGFVVISRFILTLFILITPGLA). The N-linked (GlcNAc...) asparagine glycan is linked to Asn-121.

It is found in the endoplasmic reticulum. The protein resides in the golgi apparatus. Functionally, has a role in meiosis. The polypeptide is Meiotically up-regulated gene 121 protein (mug121) (Schizosaccharomyces pombe (strain 972 / ATCC 24843) (Fission yeast)).